We begin with the raw amino-acid sequence, 448 residues long: Exodeoxyribonuclease 7 large subunit (448 aa).

This sequence belongs to the XseA family. Heterooligomer composed of large and small subunits.

It is found in the cytoplasm. Its subcellular location is the nucleoid. It catalyses the reaction Exonucleolytic cleavage in either 5'- to 3'- or 3'- to 5'-direction to yield nucleoside 5'-phosphates.. Its function is as follows. Bidirectionally degrades single-stranded DNA into large acid-insoluble oligonucleotides, which are then degraded further into small acid-soluble oligonucleotides. The sequence is that of Exodeoxyribonuclease 7 large subunit from Bacillus subtilis (strain 168).